The chain runs to 245 residues: Polyhedrin (245 aa).

Belongs to the polyhedrin family.

Major component of the virus occlusion bodies, which are large proteinaceous structures (polyhedra), that protect the virus from the outside environment for extended periods until they are ingested by insect larvae. The protein is Polyhedrin (PH) of Lepidoptera (butterflies and moths).